An 818-amino-acid chain; its full sequence is MESEQLFHRGYYRNSYNSITSASSDEELLDGAGAIMDFQTSEDDNLLDGDTAAGTHYTMTNGGSINSSTHLLDLLDEPIPGVGTYDDFHTIDWVREKCKDRERHRRINSKKKESAWEMTKSLYDAWSGWLVVTLTGLASGALAGLIDIAADWMTDLKEGICLSALWYNHEQCCWGSNETTFEERDKCPQWKTWAELIIGQAEGPGSYIMNYIMYIFWALSFAFLAVSLVKVFAPYACGSGIPEIKTILSGFIIRGYLGKWTLMIKTITLVLAVASGLSLGKEGPLVHVACCCGNIFSYLFPKYSTNEAKKREVLSAASAAGVSVAFGAPIGGVLFSLEEVSYYFPLKTLWRSFFAALVAAFVLRSINPFGNSRLVLFYVEYHTPWYLFELFPFILLGVFGGLWGAFFIRANIAWCRRRKSTKFGKYPVLEVIIVAAITAVIAFPNPYTRLNTSELIKELFTDCGPLESSSLCDYRNDMNASKIVDDIPDRPAGVGVYSAIWQLCLALIFKIIMTVFTFGIKVPSGLFIPSMAIGAIAGRIVGIAVEQLAYYHHDWFIFKEWCEVGADCITPGLYAMVGAAACLGGVTRMTVSLVVIVFELTGGLEYIVPLMAAVMTSKWVGDAFGREGIYEAHIRLNGYPFLDAKEEFTHTTLAADVMRPRRSDPPLAVLTQDNMTVDDIENMINETSYNGFPVIMSKESQRLVGFALRRDLTIAIESARKKQEGIVGSSRVCFAQHTPSLPAESPRPLKLRSILDMSPFTVTDHTPMEIVVDIFRKLGLRQCLVTHNGIVLGIITKKDILRHMAQTANQDPASIMFN.

Over 1 to 125 the chain is Cytoplasmic; the sequence is MESEQLFHRG…WEMTKSLYDA (125 aa). The Di-leucine internalization motif; mediates targeting to late endosome and lysosome membranes signature appears at 13–17; sequence RNSYN. The short motif at 18–19 is the IP motif; mediates targeting to recycling endosomes element; sequence SI. 3 short sequence motifs (di-leucine internalization motif; mediates targeting to late endosome and lysosome membranes) span residues 28–29, 46–47, and 71–75; these read LL and LLDLL. The helical transmembrane segment at 126 to 163 threads the bilayer; sequence WSGWLVVTLTGLASGALAGLIDIAADWMTDLKEGICLS. An N-linked (GlcNAc...) asparagine glycan is attached at Asn-177. Residues 209 to 232 form a helical membrane-spanning segment; that stretch reads MNYIMYIFWALSFAFLAVSLVKVF. A Selectivity filter part_1 motif is present at residues 238 to 242; sequence GSGIP. Residue Ser-239 coordinates chloride. Residues 241–248 constitute an intramembrane region (helical); that stretch reads IPEIKTIL. 2 consecutive transmembrane segments (helical) span residues 258 to 276 and 282 to 301; these read GKWT…VASG and EGPL…YLFP. Residues 280–284 carry the Selectivity filter part_2 motif; sequence GKEGP. 2 consecutive intramembrane regions (helical) follow at residues 313-325 and 329-337; these read VLSA…VSVA and PIGGVLFSL. 3 consecutive transmembrane segments (helical) span residues 349-367, 391-416, and 423-443; these read LWRS…RSIN, FPFI…AWCR, and FGKY…VIAF. Asn-451 and Asn-479 each carry an N-linked (GlcNAc...) asparagine glycan. The next 2 helical transmembrane spans lie at 500–520 and 525–544; these read IWQL…TFGI and GLFI…VGIA. Residues 525-529 carry the Selectivity filter part_3 motif; sequence GLFIP. Phe-527 contributes to the chloride binding site. 2 intramembrane regions (helical) span residues 572–586 and 590–601; these read GLYA…LGGV and TVSLVVIVFELT. The segment at residues 602-605 is an intramembrane region (note=Loop between two helices); the sequence is GGLE. Residues 606–624 traverse the membrane as a helical segment; sequence YIVPLMAAVMTSKWVGDAF. The Cytoplasmic portion of the chain corresponds to 625 to 818; the sequence is GREGIYEAHI…NQDPASIMFN (194 aa). Residue Tyr-630 coordinates chloride. 2 CBS domains span residues 658-722 and 755-812; these read MRPR…ARKK and LDMS…NQDP. ATP is bound by residues 689-691 and 796-799; these read YNG and TKKD.

The protein belongs to the chloride channel (TC 2.A.49) family. ClC-3/CLCN3 subfamily. As to quaternary structure, monomer and homodimer. Forms heterodimers with CLCN4. In terms of processing, N-glycosylated. In terms of tissue distribution, detected in kidney, in the apical part of proximal tubule cells (at protein level). Expressed at high levels in the kidney while a low level expression is seen in the brain. Within the brain, it is prominent in the hippocampus, cerebral cortex and olfactory bulb. As to expression, brain, pancreas, kidney, liver, lung, retina, olfactory bulb, and spinal cord. Pancreas, kidney, liver, lung and retina. In terms of tissue distribution, brain, heart, pancreas, kidney, liver, lung, retina, olfactory bulb, and spinal cord. As to expression, expressed at high levels in the liver and at low levels in the brain.

It is found in the cytoplasmic vesicle. The protein resides in the secretory vesicle membrane. Its subcellular location is the lysosome membrane. It localises to the late endosome membrane. The protein localises to the cell membrane. It is found in the early endosome membrane. The protein resides in the recycling endosome membrane. Its activity is regulated as follows. Inhibited by Cd(2+). May influence large dense-core vesicle exocytosis in adrenal chromaffin cells. Its function is as follows. Strongly outwardly rectifying, electrogenic H(+)/Cl(-)exchanger which mediates the exchange of chloride ions against protons. The CLC channel family contains both chloride channels and proton-coupled anion transporters that exchange chloride or another anion for protons. The presence of conserved gating glutamate residues is typical for family members that function as antiporters. In terms of biological role, strongly outwardly rectifying, electrogenic H(+)/Cl(-)exchanger which mediates the exchange of chloride ions against protons. Facilitates endosomal acidification and chloride accumulation in hepatocytes. Functionally, strongly outwardly rectifying, electrogenic H(+)/Cl(-)exchanger which mediates the exchange of chloride ions against protons. In Mus musculus (Mouse), this protein is H(+)/Cl(-) exchange transporter 3 (Clcn3).